The primary structure comprises 43 residues: Protein PsbN (43 aa).

Residues 5–25 (TVLSIFISSLLLGITIYSIYI) traverse the membrane as a helical segment.

The protein belongs to the PsbN family.

It is found in the plastid. Its subcellular location is the chloroplast thylakoid membrane. Its function is as follows. May play a role in photosystem I and II biogenesis. This Gracilaria tenuistipitata var. liui (Red alga) protein is Protein PsbN.